Consider the following 677-residue polypeptide: UvrABC system protein B (677 aa).

One can recognise a Helicase ATP-binding domain in the interval 24–412; that stretch reads EGVLQGVPAQ…EGIVVEQVIR (389 aa). 37–44 contacts ATP; it reads GVTGSGKT. The short motif at 90 to 113 is the Beta-hairpin element; that stretch reads YYDYYQPEAYLPNSDTYIEKDLAI. The Helicase C-terminal domain occupies 429-591; that stretch reads QIDDLMEEIQ…ITPQQIKKAR (163 aa). Positions 636 to 671 constitute a UVR domain; it reads EKSIERTRKLMQEAAKKLEFIEAAQYRNELLKLEDL.

It belongs to the UvrB family. In terms of assembly, forms a heterotetramer with UvrA during the search for lesions. Interacts with UvrC in an incision complex.

It localises to the cytoplasm. Functionally, the UvrABC repair system catalyzes the recognition and processing of DNA lesions. A damage recognition complex composed of 2 UvrA and 2 UvrB subunits scans DNA for abnormalities. Upon binding of the UvrA(2)B(2) complex to a putative damaged site, the DNA wraps around one UvrB monomer. DNA wrap is dependent on ATP binding by UvrB and probably causes local melting of the DNA helix, facilitating insertion of UvrB beta-hairpin between the DNA strands. Then UvrB probes one DNA strand for the presence of a lesion. If a lesion is found the UvrA subunits dissociate and the UvrB-DNA preincision complex is formed. This complex is subsequently bound by UvrC and the second UvrB is released. If no lesion is found, the DNA wraps around the other UvrB subunit that will check the other stand for damage. The polypeptide is UvrABC system protein B (Bacteroides thetaiotaomicron (strain ATCC 29148 / DSM 2079 / JCM 5827 / CCUG 10774 / NCTC 10582 / VPI-5482 / E50)).